We begin with the raw amino-acid sequence, 181 residues long: Bifunctional protein PyrR (181 aa).

The PRPP-binding motif lies at 100–112 (VVLVDDVIYTGRT).

Belongs to the purine/pyrimidine phosphoribosyltransferase family. PyrR subfamily. As to quaternary structure, homodimer and homohexamer; in equilibrium.

It carries out the reaction UMP + diphosphate = 5-phospho-alpha-D-ribose 1-diphosphate + uracil. In terms of biological role, regulates transcriptional attenuation of the pyrimidine nucleotide (pyr) operon by binding in a uridine-dependent manner to specific sites on pyr mRNA. This disrupts an antiterminator hairpin in the RNA and favors formation of a downstream transcription terminator, leading to a reduced expression of downstream genes. Its function is as follows. Also displays a weak uracil phosphoribosyltransferase activity which is not physiologically significant. In Pelotomaculum thermopropionicum (strain DSM 13744 / JCM 10971 / SI), this protein is Bifunctional protein PyrR.